The sequence spans 121 residues: Ribonuclease P protein component (121 aa).

It belongs to the RnpA family. In terms of assembly, consists of a catalytic RNA component (M1 or rnpB) and a protein subunit.

The enzyme catalyses Endonucleolytic cleavage of RNA, removing 5'-extranucleotides from tRNA precursor.. In terms of biological role, RNaseP catalyzes the removal of the 5'-leader sequence from pre-tRNA to produce the mature 5'-terminus. It can also cleave other RNA substrates such as 4.5S RNA. The protein component plays an auxiliary but essential role in vivo by binding to the 5'-leader sequence and broadening the substrate specificity of the ribozyme. The sequence is that of Ribonuclease P protein component from Neisseria meningitidis serogroup A / serotype 4A (strain DSM 15465 / Z2491).